The primary structure comprises 76 residues: ATP synthase subunit 9, mitochondrial (76 aa).

Met-1 is subject to N-formylmethionine. 2 consecutive transmembrane segments (helical) span residues 14–34 (LASI…AALI) and 52–72 (ILGF…AFLL).

F-type ATP synthases have 2 components, the catalytic core F(1) and the membrane-embedded component F(0), linked together by a central stalk and a peripheral stalk. The central stalk, also called rotor shaft, is often seen as part of F(1). The peripheral stalk is seen as part of F(0). F(0) contains the membrane channel next to the rotor. F-type ATP synthases form dimers but each monomer functions independently in ATP generation. The dimer consists of 17 different polypeptides: ATP1 (subunit alpha, 3 molecules per monomer, part of F(1)), ATP2 (subunit beta, 3 copies per monomer, part of F(1)), ATP3 (subunit gamma, part of the central stalk), ATP4 (subunit b, part of the peripheral stalk), ATP5/OSCP (subunit 5/OSCP, part of the peripheral stalk), ATP6 (subunit a, part of the peripheral stalk), ATP7 (subunit d, part of the peripheral stalk), ATP8 (subunit 8, part of the peripheral stalk), OLI1 (subunit c, part of the rotor, 10 molecules per monomer), ATP14 (subunit h, part of the peripheral stalk), ATP15 (subunit epsilon, part of the central stalk), ATP16 (subunit delta, part of the central stalk), ATP17 (subunit f, part of the peripheral stalk), ATP18 (subunit i/j, part of the peripheral stalk), ATP19 (subunit k, dimer-specific, at interface between monomers), ATP20 (subunit g, at interface between monomers), TIM11 (subunit e, at interface between monomers).

The protein resides in the mitochondrion inner membrane. Mitochondrial membrane ATP synthase (F(1)F(0) ATP synthase or Complex V) produces ATP from ADP in the presence of a proton gradient across the membrane which is generated by electron transport complexes of the respiratory chain. F-type ATP synthases consist of two structural domains, F(1) - containing the extramembraneous catalytic core, and F(0) - containing the membrane proton channel, linked together by a central stalk and a peripheral stalk. During catalysis, ATP synthesis in the catalytic domain of F(1) is coupled via a rotary mechanism of the central stalk subunits to proton translocation. Part of the complex F(0) domain. A homomeric c-ring of 10 OLI1/ATP9 subunits is part of the complex rotary element. The sequence is that of ATP synthase subunit 9, mitochondrial from Yarrowia lipolytica (strain CLIB 122 / E 150) (Yeast).